A 641-amino-acid chain; its full sequence is EKIKICLQKQVNSSFSLHNGFGGNLYATEEKRMFELVKPKAGASVLNQSTWIGFGDSRTDKSNPNFPRSADVSVKTANKFRSLTGGSLMLSMFGPPGKVDYLYQGCGKHKVFYEGVNWSPHAAIDCYRKNWTDIKLNFQKNIYELASQSHCMSLVNALDKTIPLQATAGVAGNCNNSFLKNPALYTQEVTPPXXKCGKENLAFFTLPTQFGTYECRLHLVASCYFIYDSKEVYNKRGCDNYFQVIYDSSGKVVGGLDNRVSPYTGNSGDTPTMQCDMIQLKPGRYSVRSSPRFLLMPERSYCFDMKEKGPVTAVQSIWGKDRKSDYAVDQACLSTPGCMLIQKQKPYTGEADDHHGDQEMRELLSGLDYEARCISQSGWVNETSPFTEEYLLPPKFGRCPLAAKEESIPKIPDGLLIPTSGTDTTVTKPKSRIFGIDDLIIGLLFVAIVEAGIGGYLLGSRKESGGGVTKESAEKGFEKIGNDIQILRSSTNIAIEKLNDRISHDEQAIRDLTLEIENARSEALLGELGIIRALLVGNISIGLQESLWELASEITNRAGDLAVEISPGCWIIDNNICDQSCQNFIFKFNETAPVPTIPPLDTKIDLQSDPFYWGSSLGLAITAAISLAALVISGIAICRTK.

The segment at 1–26 (EKIKICLQKQVNSSFSLHNGFGGNLY) is fusion domain-1. Residues 1–616 (EKIKICLQKQ…QSDPFYWGSS (616 aa)) lie on the Extracellular side of the membrane. Disulfide bonds link cysteine 6–cysteine 569, cysteine 106–cysteine 151, cysteine 126–cysteine 174, cysteine 196–cysteine 238, cysteine 215–cysteine 302, cysteine 223–cysteine 275, and cysteine 332–cysteine 338. Asparagine 12 and asparagine 47 each carry an N-linked (GlcNAc...) asparagine; by host glycan. The esterase domain-1 stretch occupies residues 27 to 137 (ATEEKRMFEL…RKNWTDIKLN (111 aa)). Serine 57 acts as the Nucleophile in catalysis. N-linked (GlcNAc...) asparagine; by host glycosylation is present at asparagine 130. Positions 137-296 (NFQKNIYELA…VRSSPRFLLM (160 aa)) are N-acetyl-9-O-acetylneuraminic acid binding. Positions 297–351 (PERSYCFDMKEKGPVTAVQSIWGKDRKSDYAVDQACLSTPGCMLIQKQKPYTGEA) are esterase domain-2. Catalysis depends on charge relay system residues aspartate 352 and histidine 355. Residues 352–637 (DDHHGDQEMR…AALVISGIAI (286 aa)) form a fusion domain-2 region. Asparagine 381 is a glycosylation site (N-linked (GlcNAc...) asparagine; by host). A helical transmembrane segment spans residues 617 to 637 (LGLAITAAISLAALVISGIAI). Residues 638-641 (CRTK) lie on the Cytoplasmic side of the membrane.

This sequence belongs to the influenza type C/coronaviruses hemagglutinin-esterase family. As to quaternary structure, homotrimer of disulfide-linked HEF1-HEF2. In terms of processing, in natural infection, inactive HEF is matured into HEF1 and HEF2 outside the cell by one or more trypsin-like, arginine-specific endoprotease.

The protein resides in the virion membrane. The protein localises to the host cell membrane. It catalyses the reaction N-acetyl-9-O-acetylneuraminate + H2O = N-acetylneuraminate + acetate + H(+). It carries out the reaction N-acetyl-4-O-acetylneuraminate + H2O = N-acetylneuraminate + acetate + H(+). Its function is as follows. Binds to the N-acetyl-9-O-acetylneuraminic acid residues on the cell surface, bringing about the attachment of the virus particle to the cell. Plays a major role in the determination of host range restriction and virulence. Class I viral fusion protein. Responsible for penetration of the virus into the cell cytoplasm by mediating the fusion of the membrane of the endocytosed virus particle with the endosomal membrane. Low pH in endosomes induce an irreversible conformational change in HEF2, releasing the fusion hydrophobic peptide. Several trimers are required to form a competent fusion pore. Displays a receptor-destroying activity which is a neuraminidate-O-acetyl esterase. This activity cleaves off any receptor on the cell surface, which would otherwise prevent virions release. These cleavages prevent self-aggregation and ensure the efficient spread of the progeny virus from cell to cell. This Influenza C virus (strain C/Nara/1982) protein is Hemagglutinin-esterase-fusion glycoprotein (HE).